Consider the following 254-residue polypeptide: Hydroxyacylglutathione hydrolase (254 aa).

7 residues coordinate Zn(2+): histidine 54, histidine 56, aspartate 58, histidine 59, histidine 111, aspartate 130, and histidine 168.

This sequence belongs to the metallo-beta-lactamase superfamily. Glyoxalase II family. In terms of assembly, monomer. Zn(2+) serves as cofactor.

The catalysed reaction is an S-(2-hydroxyacyl)glutathione + H2O = a 2-hydroxy carboxylate + glutathione + H(+). The protein operates within secondary metabolite metabolism; methylglyoxal degradation; (R)-lactate from methylglyoxal: step 2/2. Its function is as follows. Thiolesterase that catalyzes the hydrolysis of S-D-lactoyl-glutathione to form glutathione and D-lactic acid. In Legionella pneumophila (strain Paris), this protein is Hydroxyacylglutathione hydrolase.